We begin with the raw amino-acid sequence, 312 residues long: Elongation factor Ts (312 aa).

The involved in Mg(2+) ion dislocation from EF-Tu stretch occupies residues 80-83 (TDFV).

Belongs to the EF-Ts family.

The protein localises to the cytoplasm. Associates with the EF-Tu.GDP complex and induces the exchange of GDP to GTP. It remains bound to the aminoacyl-tRNA.EF-Tu.GTP complex up to the GTP hydrolysis stage on the ribosome. In Paramagnetospirillum magneticum (strain ATCC 700264 / AMB-1) (Magnetospirillum magneticum), this protein is Elongation factor Ts.